A 322-amino-acid polypeptide reads, in one-letter code: Aspartate carbamoyltransferase catalytic subunit (322 aa).

Carbamoyl phosphate is bound by residues Arg-65 and Thr-66. Lys-93 serves as a coordination point for L-aspartate. 3 residues coordinate carbamoyl phosphate: Arg-115, His-143, and Gln-146. Residues Arg-176 and Arg-230 each contribute to the L-aspartate site. Carbamoyl phosphate is bound by residues Gly-271 and Pro-272.

The protein belongs to the aspartate/ornithine carbamoyltransferase superfamily. ATCase family. Heterododecamer (2C3:3R2) of six catalytic PyrB chains organized as two trimers (C3), and six regulatory PyrI chains organized as three dimers (R2).

The catalysed reaction is carbamoyl phosphate + L-aspartate = N-carbamoyl-L-aspartate + phosphate + H(+). It functions in the pathway pyrimidine metabolism; UMP biosynthesis via de novo pathway; (S)-dihydroorotate from bicarbonate: step 2/3. Its function is as follows. Catalyzes the condensation of carbamoyl phosphate and aspartate to form carbamoyl aspartate and inorganic phosphate, the committed step in the de novo pyrimidine nucleotide biosynthesis pathway. The polypeptide is Aspartate carbamoyltransferase catalytic subunit (Brucella abortus (strain S19)).